We begin with the raw amino-acid sequence, 98 residues long: HssA/B-like protein 50 (98 aa).

2 disordered regions span residues Met-1–Ser-26 and Thr-68–Ile-98. The span at Gly-84–Ile-98 shows a compositional bias: gly residues.

The protein belongs to the hssA/B family.

This is HssA/B-like protein 50 (hssl50) from Dictyostelium discoideum (Social amoeba).